We begin with the raw amino-acid sequence, 311 residues long: L-lactate dehydrogenase 2 (311 aa).

The NAD(+) site is built by Val-14, Asp-35, and Arg-40. Residues Arg-90 and 122–125 contribute to the substrate site; that span reads NPCD. NAD(+) is bound by residues 120 to 122 and Thr-145; that span reads ATN. 150 to 153 contributes to the substrate binding site; that stretch reads DTTR. Catalysis depends on His-177, which acts as the Proton acceptor. A substrate-binding site is contributed by Thr-230.

The protein belongs to the LDH/MDH superfamily. LDH family. In terms of assembly, homotetramer.

The protein resides in the cytoplasm. It carries out the reaction (S)-lactate + NAD(+) = pyruvate + NADH + H(+). Its pathway is fermentation; pyruvate fermentation to lactate; (S)-lactate from pyruvate: step 1/1. Its function is as follows. Catalyzes the conversion of lactate to pyruvate. The polypeptide is L-lactate dehydrogenase 2 (Listeria monocytogenes serovar 1/2a (strain ATCC BAA-679 / EGD-e)).